The chain runs to 291 residues: N-acetylmannosamine kinase (291 aa).

ATP contacts are provided by residues Ala5–Lys12 and Gly132–Ser139. The Zn(2+) site is built by His156, Cys166, Cys168, and Cys173.

This sequence belongs to the ROK (NagC/XylR) family. NanK subfamily. In terms of assembly, homodimer.

The catalysed reaction is an N-acyl-D-mannosamine + ATP = an N-acyl-D-mannosamine 6-phosphate + ADP + H(+). Its pathway is amino-sugar metabolism; N-acetylneuraminate degradation; D-fructose 6-phosphate from N-acetylneuraminate: step 2/5. Catalyzes the phosphorylation of N-acetylmannosamine (ManNAc) to ManNAc-6-P. The protein is N-acetylmannosamine kinase of Escherichia coli (strain 55989 / EAEC).